Here is a 104-residue protein sequence, read N- to C-terminus: Large ribosomal subunit protein eL30 (104 aa).

Belongs to the eukaryotic ribosomal protein eL30 family.

This is Large ribosomal subunit protein eL30 (RPL30) from Tetrahymena thermophila (strain SB210).